A 1220-amino-acid polypeptide reads, in one-letter code: Deubiquitinating protein VCPIP1 (1220 aa).

Positions 1–19 (MSQPPPPPPLPPPPPPPEA) are enriched in pro residues. The segment at 1–40 (MSQPPPPPPLPPPPPPPEAPQTSSSLAAAASPGGLSKRRD) is disordered. Over residues 20–35 (PQTSSSLAAAASPGGL) the composition is skewed to low complexity. The region spanning 207-360 (LIPVHVDGDG…RNHYIPLVGI (154 aa)) is the OTU domain. Residue Asp-215 is part of the active site. Cys-218 functions as the Nucleophile in the catalytic mechanism. Residue His-353 is part of the active site. Lys-407 carries the post-translational modification N6-acetyllysine. Disordered regions lie at residues 724–778 (SVMQ…KIRI) and 988–1008 (EATTRSRESSPSHGLLKLGSG). Residues Ser-746 and Ser-756 each carry the phosphoserine modification. The segment covering 754–770 (PSSAPATPTKAPYSPTT) has biased composition (low complexity). Thr-762 carries the phosphothreonine modification. Phosphoserine is present on residues Ser-767, Ser-993, Ser-997, and Ser-1076. 2 disordered regions span residues 1113–1140 (SSIQASMDKHLRDQSAEQAPSDLSQRKV) and 1185–1220 (FATRSKAQKENSMEEPEEMDSQDAETTNTTEPMDHS). Phosphoserine is present on residues Ser-1196 and Ser-1205. Positions 1197-1207 (MEEPEEMDSQD) are enriched in acidic residues. Polar residues predominate over residues 1208–1220 (AETTNTTEPMDHS).

As to quaternary structure, binds VCP and the ternary complex containing STX5A, NSFL1C and VCP. In terms of processing, phosphorylated at Ser-1205 by ATM or ATR following induction of covalent DNA-protein cross-links (DPCs).

The protein localises to the nucleus. Its subcellular location is the cytoplasm. It is found in the endoplasmic reticulum. It localises to the golgi apparatus. The protein resides in the golgi stack. It catalyses the reaction Thiol-dependent hydrolysis of ester, thioester, amide, peptide and isopeptide bonds formed by the C-terminal Gly of ubiquitin (a 76-residue protein attached to proteins as an intracellular targeting signal).. Functionally, deubiquitinating enzyme involved in DNA repair and reassembly of the Golgi apparatus and the endoplasmic reticulum following mitosis. Necessary for VCP-mediated reassembly of Golgi stacks after mitosis. Plays a role in VCP-mediated formation of transitional endoplasmic reticulum (tER). Mediates dissociation of the ternary complex containing STX5A, NSFL1C and VCP. Also involved in DNA repair following phosphorylation by ATM or ATR: acts by catalyzing deubiquitination of SPRTN, thereby promoting SPRTN recruitment to chromatin and subsequent proteolytic cleavage of covalent DNA-protein cross-links (DPCs). Hydrolyzes 'Lys-11'- and 'Lys-48'-linked polyubiquitin chains. In Mus musculus (Mouse), this protein is Deubiquitinating protein VCPIP1.